A 239-amino-acid polypeptide reads, in one-letter code: Purine nucleoside phosphorylase DeoD-type (239 aa).

His5 is an a purine D-ribonucleoside binding site. Residues Gly21, Arg25, Arg44, and 88-91 (RVGS) contribute to the phosphate site. Residues 180-182 (EME) and 204-205 (SD) contribute to the a purine D-ribonucleoside site. The Proton donor role is filled by Asp205.

Belongs to the PNP/UDP phosphorylase family. As to quaternary structure, homohexamer; trimer of homodimers.

It catalyses the reaction a purine D-ribonucleoside + phosphate = a purine nucleobase + alpha-D-ribose 1-phosphate. It carries out the reaction a purine 2'-deoxy-D-ribonucleoside + phosphate = a purine nucleobase + 2-deoxy-alpha-D-ribose 1-phosphate. Its function is as follows. Catalyzes the reversible phosphorolytic breakdown of the N-glycosidic bond in the beta-(deoxy)ribonucleoside molecules, with the formation of the corresponding free purine bases and pentose-1-phosphate. The protein is Purine nucleoside phosphorylase DeoD-type of Salmonella choleraesuis (strain SC-B67).